The following is a 213-amino-acid chain: dITP/XTP pyrophosphatase (213 aa).

17–22 (SNNAGK) lines the substrate pocket. D78 (proton acceptor) is an active-site residue. Mg(2+) is bound at residue D78. Residues S79, 164 to 167 (FGYD), K187, and 192 to 193 (HR) each bind substrate.

The protein belongs to the HAM1 NTPase family. In terms of assembly, homodimer. The cofactor is Mg(2+).

It catalyses the reaction XTP + H2O = XMP + diphosphate + H(+). It carries out the reaction dITP + H2O = dIMP + diphosphate + H(+). The catalysed reaction is ITP + H2O = IMP + diphosphate + H(+). Functionally, pyrophosphatase that catalyzes the hydrolysis of nucleoside triphosphates to their monophosphate derivatives, with a high preference for the non-canonical purine nucleotides XTP (xanthosine triphosphate), dITP (deoxyinosine triphosphate) and ITP. Seems to function as a house-cleaning enzyme that removes non-canonical purine nucleotides from the nucleotide pool, thus preventing their incorporation into DNA/RNA and avoiding chromosomal lesions. This is dITP/XTP pyrophosphatase from Bordetella parapertussis (strain 12822 / ATCC BAA-587 / NCTC 13253).